The primary structure comprises 811 residues: Glycerol-3-phosphate acyltransferase (811 aa).

The short motif at 308 to 313 (CHRSHM) is the HXXXXD motif element.

This sequence belongs to the GPAT/DAPAT family.

It localises to the cell inner membrane. It carries out the reaction sn-glycerol 3-phosphate + an acyl-CoA = a 1-acyl-sn-glycero-3-phosphate + CoA. The protein operates within phospholipid metabolism; CDP-diacylglycerol biosynthesis; CDP-diacylglycerol from sn-glycerol 3-phosphate: step 1/3. The sequence is that of Glycerol-3-phosphate acyltransferase from Pseudoalteromonas atlantica (strain T6c / ATCC BAA-1087).